Consider the following 308-residue polypeptide: Homoserine kinase (308 aa).

Residue 95–105 (PQSRGLGSSAA) participates in ATP binding.

The protein belongs to the GHMP kinase family. Homoserine kinase subfamily.

It localises to the cytoplasm. It catalyses the reaction L-homoserine + ATP = O-phospho-L-homoserine + ADP + H(+). The protein operates within amino-acid biosynthesis; L-threonine biosynthesis; L-threonine from L-aspartate: step 4/5. Its function is as follows. Catalyzes the ATP-dependent phosphorylation of L-homoserine to L-homoserine phosphate. In Corynebacterium diphtheriae (strain ATCC 700971 / NCTC 13129 / Biotype gravis), this protein is Homoserine kinase.